The sequence spans 601 residues: DNA ligase (601 aa).

Asp258 is an ATP binding site. The active-site N6-AMP-lysine intermediate is the Lys260. Arg265, Arg280, Glu310, Phe350, Arg427, and Lys433 together coordinate ATP.

This sequence belongs to the ATP-dependent DNA ligase family. Mg(2+) serves as cofactor. Requires Ca(2+) as cofactor. It depends on Mn(2+) as a cofactor.

The enzyme catalyses ATP + (deoxyribonucleotide)n-3'-hydroxyl + 5'-phospho-(deoxyribonucleotide)m = (deoxyribonucleotide)n+m + AMP + diphosphate.. Functionally, DNA ligase that seals nicks in double-stranded DNA during DNA replication, DNA recombination and DNA repair. Also has low activity with dATP. Inactive with NAD(+), CTP, GTP, UTP, dCTP, dGTP or dTTP. The sequence is that of DNA ligase from Saccharolobus shibatae (strain ATCC 51178 / DSM 5389 / JCM 8931 / NBRC 15437 / B12) (Sulfolobus shibatae).